The primary structure comprises 281 residues: 2,3,4,5-tetrahydropyridine-2,6-dicarboxylate N-succinyltransferase (281 aa).

Residues arginine 108 and aspartate 145 each coordinate substrate.

Belongs to the transferase hexapeptide repeat family. As to quaternary structure, homotrimer.

Its subcellular location is the cytoplasm. It carries out the reaction (S)-2,3,4,5-tetrahydrodipicolinate + succinyl-CoA + H2O = (S)-2-succinylamino-6-oxoheptanedioate + CoA. The protein operates within amino-acid biosynthesis; L-lysine biosynthesis via DAP pathway; LL-2,6-diaminopimelate from (S)-tetrahydrodipicolinate (succinylase route): step 1/3. This chain is 2,3,4,5-tetrahydropyridine-2,6-dicarboxylate N-succinyltransferase, found in Rhodopseudomonas palustris (strain ATCC BAA-98 / CGA009).